The primary structure comprises 244 residues: tRNA (guanine-N(1)-)-methyltransferase (244 aa).

Residues Gly-113 and 132–137 contribute to the S-adenosyl-L-methionine site; that span reads IGDYVL.

Belongs to the RNA methyltransferase TrmD family. In terms of assembly, homodimer.

The protein resides in the cytoplasm. The catalysed reaction is guanosine(37) in tRNA + S-adenosyl-L-methionine = N(1)-methylguanosine(37) in tRNA + S-adenosyl-L-homocysteine + H(+). Functionally, specifically methylates guanosine-37 in various tRNAs. In Shouchella clausii (strain KSM-K16) (Alkalihalobacillus clausii), this protein is tRNA (guanine-N(1)-)-methyltransferase.